Reading from the N-terminus, the 132-residue chain is Fatty acid-binding protein, intestinal (132 aa).

Alanine 2 is modified (N-acetylalanine). Hexadecanoate-binding residues include tryptophan 83 and arginine 107. 2 residues coordinate tetradecanoate: tryptophan 83 and arginine 107.

This sequence belongs to the calycin superfamily. Fatty-acid binding protein (FABP) family. As to expression, expressed in the small intestine. Expression in the mucosal cells of the ileum extends from the midvillar region to the villus tips.

The protein resides in the cytoplasm. FABPs are thought to play a role in the intracellular transport of long-chain fatty acids and their acyl-CoA esters. FABP2 is probably involved in triglyceride-rich lipoprotein synthesis. Binds saturated long-chain fatty acids with a high affinity, but binds with a lower affinity to unsaturated long-chain fatty acids. FABP2 may also help maintain energy homeostasis by functioning as a lipid sensor. The sequence is that of Fatty acid-binding protein, intestinal (Fabp2) from Rattus norvegicus (Rat).